The chain runs to 280 residues: Fasciclin-like arabinogalactan protein 3 (280 aa).

The signal sequence occupies residues 1–24; it reads MGLKVSSSLLCLTILLAVSSIVSA. Residues 25-169 enclose the FAS1 domain; the sequence is VNITRVLEKY…LSVVQISMPI (145 aa). N-linked (GlcNAc...) asparagine glycans are attached at residues Asn-26, Asn-126, and Asn-159. Pro residues predominate over residues 180 to 193; that stretch reads VPPPPPMSSPPAPS. The disordered stretch occupies residues 180-262; it reads VPPPPPMSSP…EPPSSASNTG (83 aa). A compositionally biased stretch (low complexity) spans 219–234; it reads APETAPASAPSESDSP. Ser-256 carries the GPI-anchor amidated serine lipid modification. A propeptide spans 257–280 (removed in mature form); that stretch reads SASNTGLSFGAVLVLGFVASFVGF.

Belongs to the fasciclin-like AGP family.

The protein resides in the cell membrane. Functionally, may be a cell surface adhesion protein. The chain is Fasciclin-like arabinogalactan protein 3 (FLA3) from Arabidopsis thaliana (Mouse-ear cress).